Reading from the N-terminus, the 261-residue chain is tRNA pseudouridine synthase A (261 aa).

Residue aspartate 51 is the Nucleophile of the active site. Tyrosine 109 is a binding site for substrate.

It belongs to the tRNA pseudouridine synthase TruA family. As to quaternary structure, homodimer.

The catalysed reaction is uridine(38/39/40) in tRNA = pseudouridine(38/39/40) in tRNA. Formation of pseudouridine at positions 38, 39 and 40 in the anticodon stem and loop of transfer RNAs. In Shewanella sp. (strain W3-18-1), this protein is tRNA pseudouridine synthase A.